The following is a 561-amino-acid chain: Type 2 DNA topoisomerase 6 subunit B (561 aa).

ATP contacts are provided by residues Asn46, Asp78, 99-100 (TK), 109-116 (GQQGIGIS), and Lys471.

Belongs to the TOP6B family. As to quaternary structure, homodimer. Heterotetramer of two Top6A and two Top6B chains.

It catalyses the reaction ATP-dependent breakage, passage and rejoining of double-stranded DNA.. In terms of biological role, relaxes both positive and negative superturns and exhibits a strong decatenase activity. The sequence is that of Type 2 DNA topoisomerase 6 subunit B from Thermococcus gammatolerans (strain DSM 15229 / JCM 11827 / EJ3).